Here is a 426-residue protein sequence, read N- to C-terminus: Phosphomethylpyrimidine synthase (426 aa).

Residues Asn65, Met94, Tyr123, His162, Ser184–Gly186, Asp225–Arg228, and Glu264 contribute to the substrate site. His268 is a Zn(2+) binding site. Tyr291 serves as a coordination point for substrate. Residue His332 participates in Zn(2+) binding. Cys408, Cys411, and Cys415 together coordinate [4Fe-4S] cluster.

Belongs to the ThiC family. [4Fe-4S] cluster is required as a cofactor.

The catalysed reaction is 5-amino-1-(5-phospho-beta-D-ribosyl)imidazole + S-adenosyl-L-methionine = 4-amino-2-methyl-5-(phosphooxymethyl)pyrimidine + CO + 5'-deoxyadenosine + formate + L-methionine + 3 H(+). It functions in the pathway cofactor biosynthesis; thiamine diphosphate biosynthesis. Functionally, catalyzes the synthesis of the hydroxymethylpyrimidine phosphate (HMP-P) moiety of thiamine from aminoimidazole ribotide (AIR) in a radical S-adenosyl-L-methionine (SAM)-dependent reaction. The sequence is that of Phosphomethylpyrimidine synthase from Methanococcus maripaludis (strain DSM 14266 / JCM 13030 / NBRC 101832 / S2 / LL).